A 152-amino-acid chain; its full sequence is Putative aryl-alcohol dehydrogenase YFL057C (152 aa).

Belongs to the aldo/keto reductase family. Aldo/keto reductase 2 subfamily.

Putative aryl-alcohol dehydrogenase. The chain is Putative aryl-alcohol dehydrogenase YFL057C from Saccharomyces cerevisiae (strain ATCC 204508 / S288c) (Baker's yeast).